Reading from the N-terminus, the 146-residue chain is uncharacterized protein (146 aa).

This is an uncharacterized protein from Sinorhizobium fredii (strain NBRC 101917 / NGR234).